The primary structure comprises 333 residues: Biotin synthase (333 aa).

The 228-residue stretch at 51 to 278 folds into the Radical SAM core domain; sequence RAIQLSTLMS…KSYVRLSAGR (228 aa). 3 residues coordinate [4Fe-4S] cluster: Cys66, Cys70, and Cys73. [2Fe-2S] cluster contacts are provided by Cys110, Cys141, Cys201, and Arg273.

Belongs to the radical SAM superfamily. Biotin synthase family. As to quaternary structure, homodimer. It depends on [4Fe-4S] cluster as a cofactor. Requires [2Fe-2S] cluster as cofactor.

It catalyses the reaction (4R,5S)-dethiobiotin + (sulfur carrier)-SH + 2 reduced [2Fe-2S]-[ferredoxin] + 2 S-adenosyl-L-methionine = (sulfur carrier)-H + biotin + 2 5'-deoxyadenosine + 2 L-methionine + 2 oxidized [2Fe-2S]-[ferredoxin]. It participates in cofactor biosynthesis; biotin biosynthesis; biotin from 7,8-diaminononanoate: step 2/2. In terms of biological role, catalyzes the conversion of dethiobiotin (DTB) to biotin by the insertion of a sulfur atom into dethiobiotin via a radical-based mechanism. This is Biotin synthase from Haemophilus influenzae (strain 86-028NP).